Here is a 75-residue protein sequence, read N- to C-terminus: RNA-binding protein KhpA (75 aa).

Residues 29 to 75 (SIILELKVAPEDMGKVIGKQGRIAKAIRTVIKAAAVKENKRVVVEII) form the KH domain.

The protein belongs to the KhpA RNA-binding protein family. In terms of assembly, forms a complex with KhpB.

The protein localises to the cytoplasm. Functionally, a probable RNA chaperone. Forms a complex with KhpB which binds to cellular RNA and controls its expression. Plays a role in peptidoglycan (PG) homeostasis and cell length regulation. In Clostridium acetobutylicum (strain ATCC 824 / DSM 792 / JCM 1419 / IAM 19013 / LMG 5710 / NBRC 13948 / NRRL B-527 / VKM B-1787 / 2291 / W), this protein is RNA-binding protein KhpA.